The sequence spans 121 residues: uncharacterized protein (121 aa).

It localises to the mitochondrion. This is an uncharacterized protein from Arabidopsis thaliana (Mouse-ear cress).